We begin with the raw amino-acid sequence, 227 residues long: tRNA (guanine-N(7)-)-methyltransferase (227 aa).

S-adenosyl-L-methionine is bound by residues Glu-58, Glu-83, Asp-110, and Asp-132. Residue Asp-132 is part of the active site. Substrate is bound by residues Lys-136, Asp-168, and 205–208; that span reads TRFE.

This sequence belongs to the class I-like SAM-binding methyltransferase superfamily. TrmB family.

The enzyme catalyses guanosine(46) in tRNA + S-adenosyl-L-methionine = N(7)-methylguanosine(46) in tRNA + S-adenosyl-L-homocysteine. Its pathway is tRNA modification; N(7)-methylguanine-tRNA biosynthesis. In terms of biological role, catalyzes the formation of N(7)-methylguanine at position 46 (m7G46) in tRNA. In Acidithiobacillus ferrooxidans (strain ATCC 23270 / DSM 14882 / CIP 104768 / NCIMB 8455) (Ferrobacillus ferrooxidans (strain ATCC 23270)), this protein is tRNA (guanine-N(7)-)-methyltransferase.